A 599-amino-acid polypeptide reads, in one-letter code: Elongation factor 4 (599 aa).

Residues 2-184 enclose the tr-type G domain; the sequence is KNIRNFSIIA…RLVRDIPPPE (183 aa). Residues 14–19 and 131–134 contribute to the GTP site; these read DHGKST and NKID.

This sequence belongs to the TRAFAC class translation factor GTPase superfamily. Classic translation factor GTPase family. LepA subfamily.

Its subcellular location is the cell inner membrane. It carries out the reaction GTP + H2O = GDP + phosphate + H(+). Required for accurate and efficient protein synthesis under certain stress conditions. May act as a fidelity factor of the translation reaction, by catalyzing a one-codon backward translocation of tRNAs on improperly translocated ribosomes. Back-translocation proceeds from a post-translocation (POST) complex to a pre-translocation (PRE) complex, thus giving elongation factor G a second chance to translocate the tRNAs correctly. Binds to ribosomes in a GTP-dependent manner. This chain is Elongation factor 4, found in Cronobacter sakazakii (strain ATCC BAA-894) (Enterobacter sakazakii).